The following is a 133-amino-acid chain: Large ribosomal subunit protein bL12 (133 aa).

Belongs to the bacterial ribosomal protein bL12 family. Homodimer. Part of the ribosomal stalk of the 50S ribosomal subunit. Forms a multimeric L10(L12)X complex, where L10 forms an elongated spine to which 2 to 4 L12 dimers bind in a sequential fashion. Binds GTP-bound translation factors.

Forms part of the ribosomal stalk which helps the ribosome interact with GTP-bound translation factors. Is thus essential for accurate translation. The protein is Large ribosomal subunit protein bL12 of Ehrlichia chaffeensis (strain ATCC CRL-10679 / Arkansas).